Here is a 578-residue protein sequence, read N- to C-terminus: GTP diphosphokinase CRSH3, chloroplastic (578 aa).

A chloroplast-targeting transit peptide spans 1-45; that stretch reads MANAGVNETVAVAVAIDAPGVGHDHGAAGEVRRPSTRRLAPAGSG. Residues 99–199 form the HD domain; the sequence is SVSRALVVAA…LELAVKLDAM (101 aa). 2 EF-hand domains span residues 468–503 and 506–537; these read ATAG…LGAG and DAEE…VKLK. Residues D481, N483, D485, R487, E492, D515, N517, D519, S521, and E526 each contribute to the Ca(2+) site.

The protein belongs to the RelA/SpoT family. In terms of tissue distribution, expressed in roots and shoots.

It localises to the plastid. Its subcellular location is the chloroplast. It catalyses the reaction GTP + ATP = guanosine 3'-diphosphate 5'-triphosphate + AMP. Activated by calcium. In terms of biological role, possesses calcium-dependent ppGpp (guanosine 3'-diphosphate 5'-diphosphate) synthetase activity in vitro and is able to functionally complement E.coli relA mutants. May be involved in a rapid plant ppGpp-mediated response to pathogens and other stresses. The polypeptide is GTP diphosphokinase CRSH3, chloroplastic (Oryza sativa subsp. japonica (Rice)).